The sequence spans 241 residues: Polycomb group RING finger protein 3 (241 aa).

An RING-type zinc finger spans residues 17 to 56; that stretch reads CRLCSGYLIDATTVTECLHTFCRSCLVKYLEENNTCPTCR. The tract at residues 115-148 is disordered; sequence AKQHLDPRNGETKADDNSNKETAEEKQEEDNDYH. A compositionally biased stretch (basic and acidic residues) spans 117–139; the sequence is QHLDPRNGETKADDNSNKETAEE. The segment at 131–241 is interaction with BCORL1; sequence NSNKETAEEK…LHYRPKMDLL (111 aa).

In terms of assembly, component of a PRC1-like complex that contains PCGF3, RNF2 and RYBP. Interacts with RNF2. Interacts with CBX6, CBX7 and CBX8. Interacts with BCORL1.

The protein resides in the nucleus. It localises to the nucleoplasm. Functionally, component of a Polycomb group (PcG) multiprotein PRC1-like complex, a complex class required to maintain the transcriptionally repressive state of many genes, including Hox genes, throughout development. PcG PRC1 complex acts via chromatin remodeling and modification of histones; it mediates monoubiquitination of histone H2A 'Lys-119', rendering chromatin heritably changed in its expressibility. Within the PRC1-like complex, regulates RNF2 ubiquitin ligase activity. Plays a redundant role with PCGF5 as part of a PRC1-like complex that mediates monoubiquitination of histone H2A 'Lys-119' on the X chromosome and is required for normal silencing of one copy of the X chromosome in XX females. The sequence is that of Polycomb group RING finger protein 3 (PcgF3) from Mus musculus (Mouse).